The chain runs to 238 residues: Sugar fermentation stimulation protein homolog (238 aa).

Belongs to the SfsA family.

The chain is Sugar fermentation stimulation protein homolog from Pseudomonas entomophila (strain L48).